A 945-amino-acid chain; its full sequence is Nonsense-mediated mRNA decay factor SMG8 (945 aa).

2 disordered regions span residues 563-604 (RAEP…SANE) and 633-671 (AEAE…ERSA).

This sequence belongs to the SMG8 family.

In terms of biological role, involved in nonsense-mediated decay (NMD) of mRNAs containing premature stop codons. Probable component of kinase complex containing nonC and recruited to stalled ribosomes. This chain is Nonsense-mediated mRNA decay factor SMG8, found in Drosophila grimshawi (Hawaiian fruit fly).